Reading from the N-terminus, the 492-residue chain is 3-octaprenyl-4-hydroxybenzoate carboxy-lyase (492 aa).

Asn175 is a binding site for Mn(2+). Prenylated FMN contacts are provided by residues 178-180 (IYR), 192-194 (RWL), and 197-198 (RG). Glu241 lines the Mn(2+) pocket. The active-site Proton donor is the Asp290.

This sequence belongs to the UbiD family. As to quaternary structure, homohexamer. Prenylated FMN serves as cofactor. It depends on Mn(2+) as a cofactor.

It localises to the cell membrane. The catalysed reaction is a 4-hydroxy-3-(all-trans-polyprenyl)benzoate + H(+) = a 2-(all-trans-polyprenyl)phenol + CO2. The protein operates within cofactor biosynthesis; ubiquinone biosynthesis. In terms of biological role, catalyzes the decarboxylation of 3-octaprenyl-4-hydroxy benzoate to 2-octaprenylphenol, an intermediate step in ubiquinone biosynthesis. In Salmonella typhi, this protein is 3-octaprenyl-4-hydroxybenzoate carboxy-lyase.